Consider the following 279-residue polypeptide: NADPH-dependent 7-cyano-7-deazaguanine reductase (279 aa).

I86 to S88 is a binding site for substrate. S88–K89 contributes to the NADPH binding site. C187 serves as the catalytic Thioimide intermediate. D194 functions as the Proton donor in the catalytic mechanism. H226–E227 is a substrate binding site. NADPH is bound at residue R255–G256.

Belongs to the GTP cyclohydrolase I family. QueF type 2 subfamily. As to quaternary structure, homodimer.

The protein resides in the cytoplasm. It carries out the reaction 7-aminomethyl-7-carbaguanine + 2 NADP(+) = 7-cyano-7-deazaguanine + 2 NADPH + 3 H(+). It participates in tRNA modification; tRNA-queuosine biosynthesis. In terms of biological role, catalyzes the NADPH-dependent reduction of 7-cyano-7-deazaguanine (preQ0) to 7-aminomethyl-7-deazaguanine (preQ1). The polypeptide is NADPH-dependent 7-cyano-7-deazaguanine reductase (Haemophilus ducreyi (strain 35000HP / ATCC 700724)).